Consider the following 729-residue polypeptide: Neurochondrin (729 aa).

An N-acetylserine modification is found at Ser-2. Position 2 is a phosphoserine (Ser-2). The residue at position 2 (Ser-2) is an N-acetylalanine. Residues Cys-3 and Cys-4 are each lipidated (S-palmitoyl cysteine). The residue at position 75 (Arg-75) is an Asymmetric dimethylarginine. Ser-448 bears the Phosphoserine mark.

This sequence belongs to the neurochondrin family. In terms of assembly, interacts with MCHR1. Interacts with SEMA4C. Interacts with DIAPH1 (via FH3 domain). Interacts with GRM5. Post-translationally, palmitoylated. Palmitoylation by ZDHHC1, ZDHHC3 and ZDHHC11 regulates the association of NCDN with endosome membranes. May also be palmitoylated by ZDHHC7. As to expression, abundantly expressed in whole adult brain and in all individual brain regions examined, including spinal cord. Weakly expressed in ovary, testis, fetal brain and small intestine.

It is found in the cytoplasm. Its subcellular location is the cytosol. The protein resides in the endosome membrane. The protein localises to the cell projection. It localises to the dendrite. It is found in the postsynapse. Probably involved in signal transduction in the nervous system, via increasing cell surface localization of GRM5/mGluR5 and positively regulating its signaling. Required for the spatial learning process. Acts as a negative regulator of Ca(2+)-calmodulin-dependent protein kinase 2 (CaMK2) phosphorylation. May play a role in modulating melanin-concentrating hormone-mediated functions via its interaction with MCHR1 that interferes with G protein-coupled signal transduction. May be involved in bone metabolism. May also be involved in neurite outgrowth. This is Neurochondrin from Homo sapiens (Human).